A 190-amino-acid chain; its full sequence is Imidazoleglycerol-phosphate dehydratase (190 aa).

This sequence belongs to the imidazoleglycerol-phosphate dehydratase family.

It is found in the cytoplasm. It carries out the reaction D-erythro-1-(imidazol-4-yl)glycerol 3-phosphate = 3-(imidazol-4-yl)-2-oxopropyl phosphate + H2O. Its pathway is amino-acid biosynthesis; L-histidine biosynthesis; L-histidine from 5-phospho-alpha-D-ribose 1-diphosphate: step 6/9. This chain is Imidazoleglycerol-phosphate dehydratase, found in Sulfurimonas denitrificans (strain ATCC 33889 / DSM 1251) (Thiomicrospira denitrificans (strain ATCC 33889 / DSM 1251)).